We begin with the raw amino-acid sequence, 163 residues long: SsrA-binding protein (163 aa).

The protein belongs to the SmpB family.

The protein resides in the cytoplasm. Its function is as follows. Required for rescue of stalled ribosomes mediated by trans-translation. Binds to transfer-messenger RNA (tmRNA), required for stable association of tmRNA with ribosomes. tmRNA and SmpB together mimic tRNA shape, replacing the anticodon stem-loop with SmpB. tmRNA is encoded by the ssrA gene; the 2 termini fold to resemble tRNA(Ala) and it encodes a 'tag peptide', a short internal open reading frame. During trans-translation Ala-aminoacylated tmRNA acts like a tRNA, entering the A-site of stalled ribosomes, displacing the stalled mRNA. The ribosome then switches to translate the ORF on the tmRNA; the nascent peptide is terminated with the 'tag peptide' encoded by the tmRNA and targeted for degradation. The ribosome is freed to recommence translation, which seems to be the essential function of trans-translation. In Shewanella sp. (strain ANA-3), this protein is SsrA-binding protein.